Here is a 258-residue protein sequence, read N- to C-terminus: Allene oxide cyclase 3, chloroplastic (258 aa).

The N-terminal 56 residues, 1 to 56 (MASSSAAMSLESISMTTLNNLSRNHQSHRSSLLGFSRSFQNLGISSNGPDFSSRSR), are a transit peptide targeting the chloroplast.

The protein belongs to the allene oxide cyclase family. Highly expressed in fully developed leaves.

It is found in the plastid. Its subcellular location is the chloroplast. The catalysed reaction is (9Z,13S,15Z)-12,13-epoxyoctadeca-9,11,15-trienoate = (9S,13S,15Z)-12-oxophyto-10,15-dienoate. Involved in the production of 12-oxo-phytodienoic acid (OPDA), a precursor of jasmonic acid. This chain is Allene oxide cyclase 3, chloroplastic (AOC3), found in Arabidopsis thaliana (Mouse-ear cress).